Here is a 218-residue protein sequence, read N- to C-terminus: Putative transposase InsD for insertion element IS2E (218 aa).

An Integrase catalytic domain is found at 23–206; it reads KPAVPPSKRA…SPREYLRQRA (184 aa).

Involved in the transposition of the insertion sequence IS2. The chain is Putative transposase InsD for insertion element IS2E (insD8) from Escherichia coli (strain K12).